The chain runs to 212 residues: Probable chemoreceptor glutamine deamidase CheD (212 aa).

This sequence belongs to the CheD family.

It catalyses the reaction L-glutaminyl-[protein] + H2O = L-glutamyl-[protein] + NH4(+). Probably deamidates glutamine residues to glutamate on methyl-accepting chemotaxis receptors (MCPs), playing an important role in chemotaxis. The protein is Probable chemoreceptor glutamine deamidase CheD of Bordetella parapertussis (strain 12822 / ATCC BAA-587 / NCTC 13253).